A 484-amino-acid polypeptide reads, in one-letter code: uncharacterized protein (484 aa).

The 180-residue stretch at 47 to 226 folds into the FAD-binding PCMH-type domain; that stretch reads TLPIPAAVVK…TEVTVKIFKF (180 aa).

Belongs to the FAD-binding oxidoreductase/transferase type 4 family.

This is an uncharacterized protein from Escherichia coli (strain K12).